Consider the following 178-residue polypeptide: FXYD domain-containing ion transport regulator 5 (178 aa).

The N-terminal stretch at 1–21 is a signal peptide; it reads MSPPSQLCLLTIVALILPSEG. Residues 21–126 are disordered; it reads GQTPEKPRSS…YMPPSYIENP (106 aa). The Extracellular portion of the chain corresponds to 22–146; that stretch reads QTPEKPRSSF…YDNTTLRKRG (125 aa). Residues 29 to 58 are compositionally biased toward polar residues; the sequence is SSFTAHQSSVTTHVPVPDQTSPGVQTTPPI. Positions 70–79 are enriched in low complexity; the sequence is QTAAKTKTQQ. Residues 147-164 form a helical membrane-spanning segment; the sequence is LLVAAVLFITGIIILTSG. The Cytoplasmic segment spans residues 165-178; the sequence is KCRQFSQLCLNRHR.

The protein belongs to the FXYD family. As to quaternary structure, regulatory subunit of the sodium/potassium-transporting ATPase which is composed of a catalytic alpha subunit, a non-catalytic beta subunit and an additional regulatory subunit. The regulatory subunit, a member of the FXYD protein family, modulates the enzymatic activity in a tissue- and isoform-specific way by changing affinities of the Na+/K+-ATPase toward Na(+), K(+) or ATP. Glycosylated. In terms of tissue distribution, spleen, lung, skeletal muscle, and testis.

It localises to the cell membrane. Its subcellular location is the basolateral cell membrane. Functionally, associates with and regulates the activity of the sodium/potassium-transporting ATPase (NKA) which catalyzes the hydrolysis of ATP coupled with the exchange of Na(+) and K(+) ions across the plasma membrane. May increase NKA activity by increasing the apparent affinity for Na(+). Involved in down-regulation of E-cadherin which results in reduced cell adhesion. Promotes metastasis. The protein is FXYD domain-containing ion transport regulator 5 (Fxyd5) of Rattus norvegicus (Rat).